Here is a 495-residue protein sequence, read N- to C-terminus: Aspartyl/glutamyl-tRNA(Asn/Gln) amidotransferase subunit B (495 aa).

The protein belongs to the GatB/GatE family. GatB subfamily. In terms of assembly, heterotrimer of A, B and C subunits.

It carries out the reaction L-glutamyl-tRNA(Gln) + L-glutamine + ATP + H2O = L-glutaminyl-tRNA(Gln) + L-glutamate + ADP + phosphate + H(+). The catalysed reaction is L-aspartyl-tRNA(Asn) + L-glutamine + ATP + H2O = L-asparaginyl-tRNA(Asn) + L-glutamate + ADP + phosphate + 2 H(+). Functionally, allows the formation of correctly charged Asn-tRNA(Asn) or Gln-tRNA(Gln) through the transamidation of misacylated Asp-tRNA(Asn) or Glu-tRNA(Gln) in organisms which lack either or both of asparaginyl-tRNA or glutaminyl-tRNA synthetases. The reaction takes place in the presence of glutamine and ATP through an activated phospho-Asp-tRNA(Asn) or phospho-Glu-tRNA(Gln). The sequence is that of Aspartyl/glutamyl-tRNA(Asn/Gln) amidotransferase subunit B from Prochlorococcus marinus (strain MIT 9313).